The primary structure comprises 331 residues: Anthranilate phosphoribosyltransferase (331 aa).

Residues G78, 81 to 82, S86, 88 to 91, 106 to 114, and S118 contribute to the 5-phospho-alpha-D-ribose 1-diphosphate site; these read GD, NIST, and KHGNKSITS. Residue G78 coordinates anthranilate. Residue S90 coordinates Mg(2+). An anthranilate-binding site is contributed by N109. Position 163 (R163) interacts with anthranilate. Mg(2+) is bound by residues D222 and E223.

Belongs to the anthranilate phosphoribosyltransferase family. Homodimer. Mg(2+) is required as a cofactor.

The enzyme catalyses N-(5-phospho-beta-D-ribosyl)anthranilate + diphosphate = 5-phospho-alpha-D-ribose 1-diphosphate + anthranilate. It participates in amino-acid biosynthesis; L-tryptophan biosynthesis; L-tryptophan from chorismate: step 2/5. Functionally, catalyzes the transfer of the phosphoribosyl group of 5-phosphorylribose-1-pyrophosphate (PRPP) to anthranilate to yield N-(5'-phosphoribosyl)-anthranilate (PRA). The protein is Anthranilate phosphoribosyltransferase of Staphylococcus epidermidis (strain ATCC 35984 / DSM 28319 / BCRC 17069 / CCUG 31568 / BM 3577 / RP62A).